The following is a 250-amino-acid chain: Ribosome-inactivating protein luffin-B (250 aa).

Glutamate 160 is a catalytic residue.

It belongs to the ribosome-inactivating protein family. Type 1 RIP subfamily.

The catalysed reaction is Endohydrolysis of the N-glycosidic bond at one specific adenosine on the 28S rRNA.. This Luffa aegyptiaca (Sponge gourd) protein is Ribosome-inactivating protein luffin-B.